The sequence spans 329 residues: Glutamyl-tRNA reductase (329 aa).

Substrate is bound by residues 51–54 (TCLR), Ser99, 104–106 (EDQ), and Gln110. Cys52 (nucleophile) is an active-site residue. 179 to 184 (GIGELA) provides a ligand contact to NADP(+).

It belongs to the glutamyl-tRNA reductase family. Homodimer.

The enzyme catalyses (S)-4-amino-5-oxopentanoate + tRNA(Glu) + NADP(+) = L-glutamyl-tRNA(Glu) + NADPH + H(+). It functions in the pathway porphyrin-containing compound metabolism; protoporphyrin-IX biosynthesis; 5-aminolevulinate from L-glutamyl-tRNA(Glu): step 1/2. Its function is as follows. Catalyzes the NADPH-dependent reduction of glutamyl-tRNA(Glu) to glutamate 1-semialdehyde (GSA). The sequence is that of Glutamyl-tRNA reductase from Fusobacterium nucleatum subsp. nucleatum (strain ATCC 25586 / DSM 15643 / BCRC 10681 / CIP 101130 / JCM 8532 / KCTC 2640 / LMG 13131 / VPI 4355).